Here is a 133-residue protein sequence, read N- to C-terminus: Small ribosomal subunit protein uS9 (133 aa).

The span at 95–113 (GDSKQELKSRGFLTRDPRK) shows a compositional bias: basic and acidic residues. The tract at residues 95–133 (GDSKQELKSRGFLTRDPRKKERKKYGHKKARKSFQFSKR) is disordered. Over residues 114–133 (KERKKYGHKKARKSFQFSKR) the composition is skewed to basic residues.

The protein belongs to the universal ribosomal protein uS9 family.

The protein is Small ribosomal subunit protein uS9 of Chlamydia felis (strain Fe/C-56) (Chlamydophila felis).